Reading from the N-terminus, the 478-residue chain is Adenosylhomocysteinase (478 aa).

Positions 56, 139, and 201 each coordinate substrate. NAD(+) is bound at residue 202-204 (TTT). 2 residues coordinate substrate: Lys-231 and Asp-235. Residues Asn-236, 265-270 (GYGDVG), Glu-288, Asn-323, 344-346 (IGH), and Asn-392 each bind NAD(+).

This sequence belongs to the adenosylhomocysteinase family. It depends on NAD(+) as a cofactor.

The protein resides in the cytoplasm. The catalysed reaction is S-adenosyl-L-homocysteine + H2O = L-homocysteine + adenosine. Its pathway is amino-acid biosynthesis; L-homocysteine biosynthesis; L-homocysteine from S-adenosyl-L-homocysteine: step 1/1. Its function is as follows. May play a key role in the regulation of the intracellular concentration of adenosylhomocysteine. This Corynebacterium diphtheriae (strain ATCC 700971 / NCTC 13129 / Biotype gravis) protein is Adenosylhomocysteinase.